We begin with the raw amino-acid sequence, 346 residues long: MSKLTIAIDAMGGDVGPHIPILAALKSLQLHPNLHIIIVGNRTQLLPVLKKYQLSEHARLSLIHTDNEISMEVNPVYALRHRSDSSMHIALKLVSQGKVDACVSAGNTGALMLLAKQALKTLPGISRPALISSLPNMHLGHTYMLDLGANLQCDSHTLFNFAVMGSVLCEKVDQINSPRVSILNVGKEKNKGGDVLQHCAELLKQTKHINYAGFVEANELFTCRSNIIVTDGFSGNIALKSCEGMGRVFSEQLDKAINSSLYSKLLGKLLRPILKKQLKHLHPDMYNGASLIGLRGIVVKSHGSANEIAFTCAIEHAIQETQWQIPASISKKLETVLSERDDLSHE.

Belongs to the PlsX family. In terms of assembly, homodimer. Probably interacts with PlsY.

It localises to the cytoplasm. The catalysed reaction is a fatty acyl-[ACP] + phosphate = an acyl phosphate + holo-[ACP]. It participates in lipid metabolism; phospholipid metabolism. Its function is as follows. Catalyzes the reversible formation of acyl-phosphate (acyl-PO(4)) from acyl-[acyl-carrier-protein] (acyl-ACP). This enzyme utilizes acyl-ACP as fatty acyl donor, but not acyl-CoA. This chain is Phosphate acyltransferase, found in Psychromonas ingrahamii (strain DSM 17664 / CCUG 51855 / 37).